Here is a 705-residue protein sequence, read N- to C-terminus: Translation initiation factor IF-2 (705 aa).

A disordered region spans residues D40–S124. A compositionally biased stretch (basic and acidic residues) spans D41–N58. Residues K59–G77 show a composition bias toward low complexity. A compositionally biased stretch (basic residues) spans K94–K108. The tr-type G domain maps to E207–K376. Residues G216 to T223 form a G1 region. G216–T223 lines the GTP pocket. The tract at residues G241–H245 is G2. Positions D262–G265 are G3. GTP-binding positions include D262 to H266 and N316 to D319. Residues N316–D319 are G4. The tract at residues S352–L354 is G5.

The protein belongs to the TRAFAC class translation factor GTPase superfamily. Classic translation factor GTPase family. IF-2 subfamily.

The protein resides in the cytoplasm. One of the essential components for the initiation of protein synthesis. Protects formylmethionyl-tRNA from spontaneous hydrolysis and promotes its binding to the 30S ribosomal subunits. Also involved in the hydrolysis of GTP during the formation of the 70S ribosomal complex. The protein is Translation initiation factor IF-2 of Staphylococcus aureus (strain USA300).